The sequence spans 343 residues: Probable long-chain-alcohol O-fatty-acyltransferase 2 (343 aa).

Helical transmembrane passes span 7 to 27 (NLIKVWISALISISYCYYISS), 36 to 56 (LLSLLPIFIIFLLLPLFFSSV), 58 to 78 (FCVISGFFFTWLANFKLFLFA), 117 to 137 (PMSKWVLAFKLLIFSFLLHVY), 148 to 168 (FAFLALFTIHVYLEAELILVF), 235 to 255 (GMLATFIVSGLMHELIYFYVI), 260 to 280 (TWEVTCFFLLHGVVTCLEIAM), and 292 to 312 (AVSGLAITVFLLVTAGWLFYP).

The protein belongs to the wax synthase family.

The protein localises to the membrane. It catalyses the reaction a long chain fatty alcohol + a fatty acyl-CoA = a wax ester + CoA. In terms of biological role, catalyzes the final step in the synthesis of long-chain linear esters (waxes). The protein is Probable long-chain-alcohol O-fatty-acyltransferase 2 (AT2) of Arabidopsis thaliana (Mouse-ear cress).